We begin with the raw amino-acid sequence, 820 residues long: MLRLGLCAAALLCVCRPGAVRADCWLIEGDKGYVWLAICSQNQPPYETIPQHINSTVHDLRLNENKLKAVLYSSLNRFGNLTDLNLTKNEISYIEDGAFLGQSSLQVLQLGYNKLSNLTEGMLRGMSRLQFLFVQHNLIEVVTPTAFSECPSLISIDLSSNRLSRLDGATFASLASLMVCELAGNPFNCECDLFGFLAWLVVFNNVTKNYDRLQCESPREFAGYPLLVPRPYHSLNAITVLQAKCRNGSLPARPVSHPTPYSTDAQREPDENSGFNPDEILSVEPPASSTTDASAGPAIKLHHVTFTSATLVVIIPHPYSKMYILVQYNNSYFSDVMTLKNKKEIVTLDKLRAHTEYTFCVTSLRNSRRFNHTCLTFTTRDPVPGDLAPSTSTTTHYIMTILGCLFGMVIVLGAVYYCLRKRRMQEEKQKSVNVKKTILEMRYGADVDAGSIVHAAQKLGEPPVLPVSRMASIPSMIGEKLPTAKGLEAGLDTPKVATKGNYIEVRTGAGGDGLARPEDDLPDLENGQGSAAEISTIAKEVDKVNQIINNCIDALKLDSASFLGGGSSSGDPELAFECQSLPAAAAASSATGPGALERPSFLSPPYKESSHHPLQRQLSADAAVTRKTCSVSSSGSIKSAKVFSLDVPDHPAATGLAKGDSKYIEKGSPLNSPLDRLPLVPAGSGGGSGGGGGIHHLEVKPAYHCSEHRHSFPALYYEEGADSLSQRVSFLKPLTRSKRDSTYSQLSPRHYYSGYSSSPEYSSESTHKIWERFRPYKKHHREEVYMAAGHALRKKVQFAKDEDLHDILDYWKGVSAQQKL.

A signal peptide spans 1-22 (MLRLGLCAAALLCVCRPGAVRA). Topologically, residues 23-397 (DCWLIEGDKG…APSTSTTTHY (375 aa)) are extracellular. Residue Asn-54 is glycosylated (N-linked (GlcNAc...) asparagine). LRR repeat units follow at residues 56-77 (TVHDLRLNENKLKAVLYSSLNR), 80-101 (NLTDLNLTKNEISYIEDGAFLG), 104-125 (SLQVLQLGYNKLSNLTEGMLRG), 128-149 (RLQFLFVQHNLIEVVTPTAFSE), and 152-173 (SLISIDLSSNRLSRLDGATFAS). Residues Asn-80, Asn-85, and Asn-117 are each glycosylated (N-linked (GlcNAc...) asparagine). Positions 185 to 247 (NPFNCECDLF…ITVLQAKCRN (63 aa)) constitute an LRRCT domain. Residues Asn-205 and Asn-247 are each glycosylated (N-linked (GlcNAc...) asparagine). The interval 250–294 (LPARPVSHPTPYSTDAQREPDENSGFNPDEILSVEPPASSTTDAS) is disordered. The 88-residue stretch at 292–379 (DASAGPAIKL…FNHTCLTFTT (88 aa)) folds into the Fibronectin type-III domain. The chain crosses the membrane as a helical span at residues 398-418 (IMTILGCLFGMVIVLGAVYYC). The Cytoplasmic portion of the chain corresponds to 419-820 (LRKRRMQEEK…WKGVSAQQKL (402 aa)). 2 disordered regions span residues 508–527 (GAGGDGLARPEDDLPDLENG) and 589–612 (SATGPGALERPSFLSPPYKESSHH). Ser-619, Ser-668, and Ser-672 each carry phosphoserine. The disordered stretch occupies residues 654-677 (TGLAKGDSKYIEKGSPLNSPLDRL).

Interacts with PPP1CA.

The protein resides in the membrane. Its function is as follows. Inhibits phosphatase activity of protein phosphatase 1 (PP1) complexes. The chain is Protein phosphatase 1 regulatory subunit 29 (ELFN2) from Homo sapiens (Human).